The primary structure comprises 506 residues: Maturase K (506 aa).

The protein belongs to the intron maturase 2 family. MatK subfamily.

Its subcellular location is the plastid. It localises to the chloroplast. In terms of biological role, usually encoded in the trnK tRNA gene intron. Probably assists in splicing its own and other chloroplast group II introns. The sequence is that of Maturase K from Medicago sativa (Alfalfa).